A 273-amino-acid polypeptide reads, in one-letter code: 4-hydroxy-tetrahydrodipicolinate reductase (273 aa).

NAD(+) is bound by residues 12–17 (GAGGRM) and Glu-38. Arg-39 provides a ligand contact to NADP(+). NAD(+)-binding positions include 102–104 (GTT) and 126–129 (AANF). The active-site Proton donor/acceptor is His-159. Position 160 (His-160) interacts with (S)-2,3,4,5-tetrahydrodipicolinate. Lys-163 serves as the catalytic Proton donor. 169 to 170 (GT) lines the (S)-2,3,4,5-tetrahydrodipicolinate pocket.

Belongs to the DapB family. In terms of assembly, homotetramer.

The protein resides in the cytoplasm. The enzyme catalyses (S)-2,3,4,5-tetrahydrodipicolinate + NAD(+) + H2O = (2S,4S)-4-hydroxy-2,3,4,5-tetrahydrodipicolinate + NADH + H(+). The catalysed reaction is (S)-2,3,4,5-tetrahydrodipicolinate + NADP(+) + H2O = (2S,4S)-4-hydroxy-2,3,4,5-tetrahydrodipicolinate + NADPH + H(+). The protein operates within amino-acid biosynthesis; L-lysine biosynthesis via DAP pathway; (S)-tetrahydrodipicolinate from L-aspartate: step 4/4. In terms of biological role, catalyzes the conversion of 4-hydroxy-tetrahydrodipicolinate (HTPA) to tetrahydrodipicolinate. The protein is 4-hydroxy-tetrahydrodipicolinate reductase of Salmonella gallinarum (strain 287/91 / NCTC 13346).